Here is an 83-residue protein sequence, read N- to C-terminus: Mitochondrial import inner membrane translocase subunit Tim8 B (83 aa).

Ala2 carries the N-acetylalanine modification. Residues 36–59 carry the Twin CX3C motif motif; that stretch reads CWDKCVEKPGNRLDSRTENCLSSC. 2 cysteine pairs are disulfide-bonded: Cys36–Cys59 and Cys40–Cys55.

This sequence belongs to the small Tim family. As to quaternary structure, heterohexamer; possibly composed of 3 copies of TIMM8B and 3 copies of TIMM13, named soluble 70 kDa complex. Associates with the TIM22 complex, whose core is composed of TIMM22. Ubiquitous, with highest expression in heart, kidney, liver and skeletal muscle.

It localises to the mitochondrion inner membrane. Its function is as follows. Probable mitochondrial intermembrane chaperone that participates in the import and insertion of some multi-pass transmembrane proteins into the mitochondrial inner membrane. Also required for the transfer of beta-barrel precursors from the TOM complex to the sorting and assembly machinery (SAM complex) of the outer membrane. Acts as a chaperone-like protein that protects the hydrophobic precursors from aggregation and guide them through the mitochondrial intermembrane space. In Homo sapiens (Human), this protein is Mitochondrial import inner membrane translocase subunit Tim8 B (TIMM8B).